The chain runs to 570 residues: Peptidyl-prolyl cis-trans isomerase FKBP9 (570 aa).

An N-terminal signal peptide occupies residues 1 to 24 (MALGARGWRRRSLLLLLLWVTGQA). PPIase FKBP-type domains are found at residues 54-142 (GDFV…VDIW), 166-254 (SDFV…LDLH), 278-365 (GDFL…IDFH), and 389-477 (GDYL…LELV). N-linked (GlcNAc...) asparagine glycans are attached at residues asparagine 174, asparagine 286, asparagine 302, and asparagine 397. EF-hand domains follow at residues 488 to 523 (WNGE…QVAT) and 533 to 568 (NAEM…AKHD). Aspartate 501, aspartate 503, asparagine 505, glutamate 507, glutamate 512, aspartate 546, asparagine 548, aspartate 550, lysine 552, and glutamate 557 together coordinate Ca(2+). Residues 567–570 (HDEL) carry the Prevents secretion from ER motif.

In terms of processing, phosphorylated. As to expression, predominantly expressed in heart, skeletal muscle, lung, liver and kidney. Lower levels found in brain, spleen and testis.

The protein localises to the endoplasmic reticulum lumen. It catalyses the reaction [protein]-peptidylproline (omega=180) = [protein]-peptidylproline (omega=0). Inhibited by FK506. Functionally, PPIases accelerate the folding of proteins during protein synthesis. The protein is Peptidyl-prolyl cis-trans isomerase FKBP9 (Fkbp9) of Mus musculus (Mouse).